A 141-amino-acid polypeptide reads, in one-letter code: Large ribosomal subunit protein uL11 (141 aa).

Belongs to the universal ribosomal protein uL11 family. Part of the ribosomal stalk of the 50S ribosomal subunit. Interacts with L10 and the large rRNA to form the base of the stalk. L10 forms an elongated spine to which L12 dimers bind in a sequential fashion forming a multimeric L10(L12)X complex. In terms of processing, one or more lysine residues are methylated.

In terms of biological role, forms part of the ribosomal stalk which helps the ribosome interact with GTP-bound translation factors. The chain is Large ribosomal subunit protein uL11 from Thermomicrobium roseum (strain ATCC 27502 / DSM 5159 / P-2).